A 365-amino-acid polypeptide reads, in one-letter code: Ribosomal RNA large subunit methyltransferase M (365 aa).

Residues S193, 226-229, D245, D265, and D282 each bind S-adenosyl-L-methionine; that span reads CPGG. The Proton acceptor role is filled by K311.

This sequence belongs to the class I-like SAM-binding methyltransferase superfamily. RNA methyltransferase RlmE family. RlmM subfamily. Monomer.

It is found in the cytoplasm. The enzyme catalyses cytidine(2498) in 23S rRNA + S-adenosyl-L-methionine = 2'-O-methylcytidine(2498) in 23S rRNA + S-adenosyl-L-homocysteine + H(+). Its function is as follows. Catalyzes the 2'-O-methylation at nucleotide C2498 in 23S rRNA. In Alteromonas mediterranea (strain DSM 17117 / CIP 110805 / LMG 28347 / Deep ecotype), this protein is Ribosomal RNA large subunit methyltransferase M.